The sequence spans 222 residues: Phosphoribosylformylglycinamidine synthase subunit PurQ (222 aa).

The Glutamine amidotransferase type-1 domain maps to 3 to 222 (AAVVVFPGSN…RALAGALTPA (220 aa)). The active-site Nucleophile is the C86. Active-site residues include H194 and E196.

As to quaternary structure, part of the FGAM synthase complex composed of 1 PurL, 1 PurQ and 2 PurS subunits.

The protein resides in the cytoplasm. The enzyme catalyses N(2)-formyl-N(1)-(5-phospho-beta-D-ribosyl)glycinamide + L-glutamine + ATP + H2O = 2-formamido-N(1)-(5-O-phospho-beta-D-ribosyl)acetamidine + L-glutamate + ADP + phosphate + H(+). It carries out the reaction L-glutamine + H2O = L-glutamate + NH4(+). The protein operates within purine metabolism; IMP biosynthesis via de novo pathway; 5-amino-1-(5-phospho-D-ribosyl)imidazole from N(2)-formyl-N(1)-(5-phospho-D-ribosyl)glycinamide: step 1/2. Its function is as follows. Part of the phosphoribosylformylglycinamidine synthase complex involved in the purines biosynthetic pathway. Catalyzes the ATP-dependent conversion of formylglycinamide ribonucleotide (FGAR) and glutamine to yield formylglycinamidine ribonucleotide (FGAM) and glutamate. The FGAM synthase complex is composed of three subunits. PurQ produces an ammonia molecule by converting glutamine to glutamate. PurL transfers the ammonia molecule to FGAR to form FGAM in an ATP-dependent manner. PurS interacts with PurQ and PurL and is thought to assist in the transfer of the ammonia molecule from PurQ to PurL. The sequence is that of Phosphoribosylformylglycinamidine synthase subunit PurQ from Ruegeria pomeroyi (strain ATCC 700808 / DSM 15171 / DSS-3) (Silicibacter pomeroyi).